A 161-amino-acid chain; its full sequence is Protein-export protein SecB (161 aa).

This sequence belongs to the SecB family. In terms of assembly, homotetramer, a dimer of dimers. One homotetramer interacts with 1 SecA dimer.

The protein resides in the cytoplasm. One of the proteins required for the normal export of preproteins out of the cell cytoplasm. It is a molecular chaperone that binds to a subset of precursor proteins, maintaining them in a translocation-competent state. It also specifically binds to its receptor SecA. This chain is Protein-export protein SecB, found in Coxiella burnetii (strain CbuG_Q212) (Coxiella burnetii (strain Q212)).